The primary structure comprises 830 residues: MEKWARIKYTPNLPLGENGERVTASQKHIELSCEAACEGMVLLKNDRNVLPIRKGTRVALFGKGVFDYVKGGGGSGDVTVPYIRNLYEGLSQYTSDISIYDKSVRFYQEYVADQYRLGIAPGMIKEPALPEDILADAAAYADTAIIAISRFSGEGWDRKVAGVDREIKCEAKDLVEQGNKIFDHGDFYLTNAEKKMVKMVKENFSSVIVVMNVGGVVDTTWFKKDDQISSVLMAWQGGIEGGLAAARILLGKVNPSGKLSDTFAARLEDYPSTEGFHEDDDYVDYTEDIYVGYRYFETIPGAKEKVNYPFGYGLSYTTFLLEDYKAEPFVASAADEVGKSDSDLADAIVASVTVTNIGKIPGKEVVQLYYSAPQGKLGKPAKVLGGYAKTRLLQPGESQRVTIALYMEDMASYDDLGKVKKAAWLLEKGEYHFFLGTSVRDTRLLDYTYELSKNIIVEQVSNKLVPTSLPKRMLADGTYEELPQTEPVDTYATIFPRPKNWKETIEHDVLKTPVVRPQDRFQLFLPPKEGDPKKFIEVAECKVTLEDFIAQLSNEQLASLLGGQPNVGMANTFGYGNLPEVGVPNAQTCDGPAGVRIAPEVGVVTTAFPCSTLLACTWNEDICYEVGVAGGEEAKECNFGAWLTPAVNIHRSPLCGRNFEYYSEDPFLAGKQAAAMVRGIQSNNIIATPKHFALNNKESNRKGSDSRASERAIREIYLKAFEIIVKEQSPGASCLQYNIVNGQRSSESHDLLTGILRDEWGFEGVVVSDWWGFGEHYKEVLAGNDIKMGCGYTEQLLEAIDKKALKRKDLEKRQSESSRCFSNSTKLKAA.

Aspartate 769 is an active-site residue.

The protein belongs to the glycosyl hydrolase 3 family.

The catalysed reaction is Hydrolysis of terminal, non-reducing beta-D-glucosyl residues with release of beta-D-glucose.. B.fibrisolvens beta-glucosidase hydrolyzes cellobiose to a limited extent, cellotriose to cellobiose and glucose, and cellotetraose and cellopentaose to predominantly glucose. The chain is Beta-glucosidase A (bglA) from Butyrivibrio fibrisolvens.